Consider the following 214-residue polypeptide: Cytochrome b (214 aa).

A run of 4 helical transmembrane segments spans residues 31 to 51 (FGSM…FLAF), 75 to 96 (WIMQ…YIHI), 111 to 131 (WVSG…GYVL), and 176 to 196 (FFAL…IHIL). Residues His-81 and His-95 each contribute to the heme b site. His-180 and His-194 together coordinate heme b. His-199 serves as a coordination point for a ubiquinone.

The protein belongs to the cytochrome b family. As to quaternary structure, the cytochrome bc1 complex contains 3 respiratory subunits (MT-CYB, CYC1 and UQCRFS1), 2 core proteins (UQCRC1 and UQCRC2) and probably 6 low-molecular weight proteins. Heme b serves as cofactor.

It is found in the mitochondrion inner membrane. Its function is as follows. Component of the ubiquinol-cytochrome c reductase complex (complex III or cytochrome b-c1 complex) that is part of the mitochondrial respiratory chain. The b-c1 complex mediates electron transfer from ubiquinol to cytochrome c. Contributes to the generation of a proton gradient across the mitochondrial membrane that is then used for ATP synthesis. The protein is Cytochrome b (MT-CYB) of Gloydius blomhoffii (Mamushi).